A 513-amino-acid chain; its full sequence is Maturase K (513 aa).

The protein belongs to the intron maturase 2 family. MatK subfamily.

It localises to the plastid. The protein localises to the chloroplast. Usually encoded in the trnK tRNA gene intron. Probably assists in splicing its own and other chloroplast group II introns. This Zea mays (Maize) protein is Maturase K.